A 509-amino-acid polypeptide reads, in one-letter code: Maturase K (509 aa).

Belongs to the intron maturase 2 family. MatK subfamily.

The protein localises to the plastid. Its subcellular location is the chloroplast. In terms of biological role, usually encoded in the trnK tRNA gene intron. Probably assists in splicing its own and other chloroplast group II introns. The chain is Maturase K from Clematis vitalba (Evergreen clematis).